A 278-amino-acid chain; its full sequence is Undecaprenyl-diphosphatase (278 aa).

6 helical membrane passes run 44–64, 84–104, 112–132, 187–207, 224–244, and 254–274; these read FLEM…MTIY, WQLW…AVPL, FNFM…FIWI, SVAA…YSGL, VWIL…VIRF, and FTVF…YAFI.

The protein belongs to the UppP family.

Its subcellular location is the cell membrane. It carries out the reaction di-trans,octa-cis-undecaprenyl diphosphate + H2O = di-trans,octa-cis-undecaprenyl phosphate + phosphate + H(+). In terms of biological role, catalyzes the dephosphorylation of undecaprenyl diphosphate (UPP). Confers resistance to bacitracin. The protein is Undecaprenyl-diphosphatase of Streptococcus suis (strain 98HAH33).